Reading from the N-terminus, the 203-residue chain is MSQREGSLEDHQTDSSISFLPHLEAKIRQTHNLARLLTKYAEQLLEEYVQQQGEPFGLPGFSPPRLPLAGLSGPAPSHAGLPVSERLRQDAAALSVLPALLDAVRRRQAELNPRAPRLLRSLEDAARQVRALGAAVETVLAALGAAARGPGPEPVTVATLFTANSTAGIFSAKVLGFHVCGLYGEWVSRTEGDLGQLVPGGVA.

Belongs to the IL-6 superfamily. Highly expressed in heart, skeletal muscle, liver, lung and kidney. Lower levels in testis and brain. No expression in spleen.

Its subcellular location is the secreted. Functionally, induces cardiac myocyte hypertrophy in vitro. Binds to and activates the ILST/gp130 receptor. The protein is Cardiotrophin-1 (Ctf1) of Mus musculus (Mouse).